We begin with the raw amino-acid sequence, 59 residues long: Large ribosomal subunit protein bL33 (59 aa).

The protein belongs to the bacterial ribosomal protein bL33 family.

The sequence is that of Large ribosomal subunit protein bL33 from Prosthecochloris aestuarii (strain DSM 271 / SK 413).